A 521-amino-acid chain; its full sequence is Signal recognition particle protein (521 aa).

GTP-binding positions include 107–114, 196–200, and 254–257; these read GLQGSGKT, DTAGR, and TKLD. A disordered region spans residues 436–505; sequence GGMGIPGMGR…MPDGLNELPP (70 aa). Residues 447-462 are compositionally biased toward basic residues; the sequence is SATRKSKGGKGKKRAR.

Belongs to the GTP-binding SRP family. SRP54 subfamily. Part of the signal recognition particle protein translocation system, which is composed of SRP and FtsY.

Its subcellular location is the cytoplasm. The catalysed reaction is GTP + H2O = GDP + phosphate + H(+). Functionally, involved in targeting and insertion of nascent membrane proteins into the cytoplasmic membrane. Binds to the hydrophobic signal sequence of the ribosome-nascent chain (RNC) as it emerges from the ribosomes. The SRP-RNC complex is then targeted to the cytoplasmic membrane where it interacts with the SRP receptor FtsY. The sequence is that of Signal recognition particle protein from Mycobacterium leprae (strain TN).